The following is a 180-amino-acid chain: tRNA (cytidine(56)-2'-O)-methyltransferase (180 aa).

S-adenosyl-L-methionine is bound by residues Leu-84 and 112–116 (GAEKV).

Belongs to the aTrm56 family. In terms of assembly, homodimer.

It is found in the cytoplasm. The enzyme catalyses cytidine(56) in tRNA + S-adenosyl-L-methionine = 2'-O-methylcytidine(56) in tRNA + S-adenosyl-L-homocysteine + H(+). Functionally, specifically catalyzes the AdoMet-dependent 2'-O-ribose methylation of cytidine at position 56 in tRNAs. This chain is tRNA (cytidine(56)-2'-O)-methyltransferase, found in Haloarcula marismortui (strain ATCC 43049 / DSM 3752 / JCM 8966 / VKM B-1809) (Halobacterium marismortui).